The chain runs to 113 residues: Hydrogenase maturation factor HypA (113 aa).

His-2 provides a ligand contact to Ni(2+). Residues Cys-73, Cys-76, Cys-89, and Cys-92 each coordinate Zn(2+).

The protein belongs to the HypA/HybF family.

In terms of biological role, involved in the maturation of [NiFe] hydrogenases. Required for nickel insertion into the metal center of the hydrogenase. This Rhodobacter capsulatus (Rhodopseudomonas capsulata) protein is Hydrogenase maturation factor HypA.